The sequence spans 380 residues: 4-hydroxy-tetrahydrodipicolinate synthase, chloroplastic (380 aa).

The disordered stretch occupies residues 1–44; sequence MISPTNLLPARKITPVSNGGAATASPSSPSVAARPRRLPSGLQS. A chloroplast-targeting transit peptide spans 1-54; the sequence is MISPTNLLPARKITPVSNGGAATASPSSPSVAARPRRLPSGLQSVTGRGKVSLA. Over residues 21-33 the composition is skewed to low complexity; the sequence is AATASPSSPSVAA. Residue T123 coordinates pyruvate. Residue Y209 is the Proton donor/acceptor of the active site. The active-site Schiff-base intermediate with substrate is the K237. I276 serves as a coordination point for pyruvate.

It belongs to the DapA family. Tetramer of modified subunits derived from two genes in different combinations.

The protein resides in the plastid. It localises to the chloroplast. It catalyses the reaction L-aspartate 4-semialdehyde + pyruvate = (2S,4S)-4-hydroxy-2,3,4,5-tetrahydrodipicolinate + H2O + H(+). Its pathway is amino-acid biosynthesis; L-lysine biosynthesis via DAP pathway; (S)-tetrahydrodipicolinate from L-aspartate: step 3/4. Its activity is regulated as follows. Sensitive to lysine inhibition. This inhibition increase in an allosteric manner with increasing concentration of the inhibitor. Its function is as follows. Catalyzes the condensation of (S)-aspartate-beta-semialdehyde [(S)-ASA] and pyruvate to 4-hydroxy-tetrahydrodipicolinate (HTPA). The chain is 4-hydroxy-tetrahydrodipicolinate synthase, chloroplastic from Zea mays (Maize).